Reading from the N-terminus, the 133-residue chain is S-adenosylmethionine decarboxylase proenzyme (133 aa).

Serine 63 serves as the catalytic Schiff-base intermediate with substrate; via pyruvic acid. Pyruvic acid (Ser); by autocatalysis is present on serine 63. The active-site Proton acceptor; for processing activity is histidine 68. Catalysis depends on cysteine 83, which acts as the Proton donor; for catalytic activity.

The protein belongs to the prokaryotic AdoMetDC family. Type 1 subfamily. Heterotetramer of two alpha and two beta chains arranged as a dimer of alpha/beta heterodimers. Pyruvate is required as a cofactor. In terms of processing, is synthesized initially as an inactive proenzyme. Formation of the active enzyme involves a self-maturation process in which the active site pyruvoyl group is generated from an internal serine residue via an autocatalytic post-translational modification. Two non-identical subunits are generated from the proenzyme in this reaction, and the pyruvate is formed at the N-terminus of the alpha chain, which is derived from the carboxyl end of the proenzyme. The post-translation cleavage follows an unusual pathway, termed non-hydrolytic serinolysis, in which the side chain hydroxyl group of the serine supplies its oxygen atom to form the C-terminus of the beta chain, while the remainder of the serine residue undergoes an oxidative deamination to produce ammonia and the pyruvoyl group blocking the N-terminus of the alpha chain.

It carries out the reaction S-adenosyl-L-methionine + H(+) = S-adenosyl 3-(methylsulfanyl)propylamine + CO2. It participates in amine and polyamine biosynthesis; S-adenosylmethioninamine biosynthesis; S-adenosylmethioninamine from S-adenosyl-L-methionine: step 1/1. Its function is as follows. Catalyzes the decarboxylation of S-adenosylmethionine to S-adenosylmethioninamine (dcAdoMet), the propylamine donor required for the synthesis of the polyamines spermine and spermidine from the diamine putrescine. The chain is S-adenosylmethionine decarboxylase proenzyme from Acidithiobacillus ferrooxidans (strain ATCC 23270 / DSM 14882 / CIP 104768 / NCIMB 8455) (Ferrobacillus ferrooxidans (strain ATCC 23270)).